Consider the following 534-residue polypeptide: Probable cytochrome c oxidase subunit 1 (534 aa).

Helical transmembrane passes span I35 to F55, V76 to S96, G97 to L117, I120 to G140, V165 to I185, P202 to L222, L254 to V274, and I286 to V306. Residue H81 coordinates Fe(II)-heme a. 2 residues coordinate Cu cation: H260 and Y264. Positions H260–Y264 form a cross-link, 1'-histidyl-3'-tyrosine (His-Tyr). H309 and H310 together coordinate Cu cation. 2 consecutive transmembrane segments (helical) span residues A320–F340 and M357–L377. H395 contributes to the heme a3 binding site. Transmembrane regions (helical) follow at residues F396–F416, F433–A453, and I475–L495. Residue H397 participates in Fe(II)-heme a binding.

It belongs to the heme-copper respiratory oxidase family.

The protein localises to the cell membrane. The catalysed reaction is 4 Fe(II)-[cytochrome c] + O2 + 8 H(+)(in) = 4 Fe(III)-[cytochrome c] + 2 H2O + 4 H(+)(out). Its pathway is energy metabolism; oxidative phosphorylation. Cytochrome c oxidase is the component of the respiratory chain that catalyzes the reduction of oxygen to water. Subunits 1-3 form the functional core of the enzyme complex. CO I is the catalytic subunit of the enzyme. Electrons originating in cytochrome c are transferred via the copper A center of subunit 2 and heme A of subunit 1 to the bimetallic center formed by heme A3 and copper B. The sequence is that of Probable cytochrome c oxidase subunit 1 (ctaD) from Rickettsia prowazekii (strain Madrid E).